We begin with the raw amino-acid sequence, 246 residues long: Small ribosomal subunit protein uS3 (246 aa).

Positions 38–106 (IRQYLNARLA…DVQINIYEIR (69 aa)) constitute a KH type-2 domain. Positions 218 to 246 (VAKNQSRRPNAQGGNNRGGDRNRRRKGNR) are disordered.

This sequence belongs to the universal ribosomal protein uS3 family. As to quaternary structure, part of the 30S ribosomal subunit. Forms a tight complex with proteins S10 and S14.

Functionally, binds the lower part of the 30S subunit head. Binds mRNA in the 70S ribosome, positioning it for translation. This chain is Small ribosomal subunit protein uS3, found in Porphyromonas gingivalis (strain ATCC 33277 / DSM 20709 / CIP 103683 / JCM 12257 / NCTC 11834 / 2561).